We begin with the raw amino-acid sequence, 1155 residues long: RHO1 GDP-GTP exchange protein 1 (1155 aa).

Met-1 bears the N-acetylmethionine mark. Positions 100-143 (NSSPQSFTGDQISPTNKKISINDSTRQDKGNSCTTTSSPSQKRS) are enriched in polar residues. Positions 100–249 (NSSPQSFTGD…HSRSKSSPVS (150 aa)) are disordered. A phosphoserine mark is found at Ser-154 and Ser-155. Residues 155 to 167 (SPSLLSFSKNSGS) are compositionally biased toward low complexity. Residue Thr-180 is modified to Phosphothreonine. The segment covering 190 to 227 (LHSSFNGKHSSSSTSSLFALESLKTQNRRSSNSSNHSS) has biased composition (low complexity). Residues 228–243 (QYRRHTNQHQRHHSRS) show a composition bias toward basic residues. Ser-433 bears the Phosphoserine mark. Residues 464–651 (KRQEAIYELF…KDLMKRIDRA (188 aa)) form the DH domain. The CNH domain occupies 842-1137 (TNRVNDVLIC…RMLKSYAKKI (296 aa)).

Its function is as follows. Stimulates the exchange of RHO1 GDP-bound form into GTP-bound form. The polypeptide is RHO1 GDP-GTP exchange protein 1 (ROM1) (Saccharomyces cerevisiae (strain ATCC 204508 / S288c) (Baker's yeast)).